A 182-amino-acid chain; its full sequence is Tropomyosin-like protein (182 aa).

Residues 1–68 (FDRYNQILDE…ELEQRRTEQQ (68 aa)) are a coiled coil. Basic and acidic residues predominate over residues 32–66 (DEETKKIKQEEAEMKKKIEGEASRKKLELEQRRTE). 2 disordered regions span residues 32-81 (DEET…GSTD) and 140-160 (DQPA…DAGL). Low complexity predominate over residues 140–153 (DQPAQAGPEPAAPA).

The protein resides in the cytoplasm. The protein localises to the cytoskeleton. The sequence is that of Tropomyosin-like protein from Pichia angusta (Yeast).